Consider the following 826-residue polypeptide: Zinc phosphodiesterase ELAC protein 2 (826 aa).

The N-terminal 16 residues, Met-1–Met-16, are a transit peptide targeting the mitochondrion. 2 disordered regions span residues Met-16–Cys-51 and Glu-188–Arg-231. A compositionally biased stretch (basic and acidic residues) spans Ala-27–Arg-38. Phosphoserine occurs at positions 199, 208, 212, 229, 618, and 736. Over residues Ser-208 to Leu-224 the composition is skewed to basic and acidic residues. The segment at Glu-798–Gln-826 is disordered. Residues Pro-808–Ala-820 are compositionally biased toward basic and acidic residues.

This sequence belongs to the RNase Z family. In terms of assembly, homodimer. Interacts with PTCD1. Zn(2+) is required as a cofactor. Widely expressed. Highly expressed in heart, placenta, liver, skeletal muscle, kidney, pancreas, testis and ovary. Weakly expressed in brain, lung, spleen, thymus, prostate, small intestine, colon and leukocytes.

It is found in the mitochondrion. The protein resides in the mitochondrion matrix. Its subcellular location is the mitochondrion nucleoid. It localises to the nucleus. The enzyme catalyses Endonucleolytic cleavage of RNA, removing extra 3' nucleotides from tRNA precursor, generating 3' termini of tRNAs. A 3'-hydroxy group is left at the tRNA terminus and a 5'-phosphoryl group is left at the trailer molecule.. Its function is as follows. Zinc phosphodiesterase, which displays mitochondrial tRNA 3'-processing endonuclease activity. Involved in tRNA maturation, by removing a 3'-trailer from precursor tRNA. Associates with mitochondrial DNA complexes at the nucleoids to initiate RNA processing and ribosome assembly. This is Zinc phosphodiesterase ELAC protein 2 (ELAC2) from Homo sapiens (Human).